We begin with the raw amino-acid sequence, 335 residues long: Ferrochelatase (335 aa).

2 residues coordinate Fe cation: His207 and Glu288.

The protein belongs to the ferrochelatase family.

The protein localises to the cytoplasm. It carries out the reaction heme b + 2 H(+) = protoporphyrin IX + Fe(2+). Its pathway is porphyrin-containing compound metabolism; protoheme biosynthesis; protoheme from protoporphyrin-IX: step 1/1. In terms of biological role, catalyzes the ferrous insertion into protoporphyrin IX. The chain is Ferrochelatase from Helicobacter pylori (strain G27).